Reading from the N-terminus, the 235-residue chain is Ribonuclease 3 (235 aa).

The RNase III domain occupies 6 to 131 (IDQLEKLTGH…LIAVIYLDGG (126 aa)). Position 44 (glutamate 44) interacts with Mg(2+). The active site involves aspartate 48. The Mg(2+) site is built by aspartate 117 and glutamate 120. Residue glutamate 120 is part of the active site. The region spanning 156-225 (DAKTQLQEWA…AEKILRREGI (70 aa)) is the DRBM domain.

Belongs to the ribonuclease III family. In terms of assembly, homodimer. Requires Mg(2+) as cofactor.

It is found in the cytoplasm. The enzyme catalyses Endonucleolytic cleavage to 5'-phosphomonoester.. Functionally, digests double-stranded RNA. Involved in the processing of primary rRNA transcript to yield the immediate precursors to the large and small rRNAs (23S and 16S). Processes some mRNAs, and tRNAs when they are encoded in the rRNA operon. Processes pre-crRNA and tracrRNA of type II CRISPR loci if present in the organism. The protein is Ribonuclease 3 of Bartonella henselae (strain ATCC 49882 / DSM 28221 / CCUG 30454 / Houston 1) (Rochalimaea henselae).